A 49-amino-acid chain; its full sequence is Small, acid-soluble spore protein O (49 aa).

Positions 1 to 49 are disordered; that stretch reads MGKRKANHTISGMNAASAQGQGAGYNEEFANENLTAAERQNNKKRKKNQ. The span at 8 to 20 shows a compositional bias: polar residues; the sequence is HTISGMNAASAQG.

It belongs to the SspO family.

It localises to the spore core. This is Small, acid-soluble spore protein O from Bacillus cereus (strain AH187).